The following is a 284-amino-acid chain: Tropomyosin Lep s 1.0101 (284 aa).

A coiled-coil region spans residues 1–273 (MEAIKKKMQA…KDRYRALADE (273 aa)). Residues 155–171 (AEDADGKSDEVSRKMAQ) are compositionally biased toward basic and acidic residues. Residues 155-187 (AEDADGKSDEVSRKMAQVEDDLEVAEDRVKSGD) are disordered.

It belongs to the tropomyosin family. Homodimer.

Its function is as follows. Tropomyosin, in association with the troponin complex, plays a central role in the calcium dependent regulation of muscle contraction. The polypeptide is Tropomyosin Lep s 1.0101 (Lepisma saccharinum (Silverfish)).